Reading from the N-terminus, the 188-residue chain is dCTP deaminase (188 aa).

Lys107–Arg112 lines the dCTP pocket. Glu133 acts as the Proton donor/acceptor in catalysis. DCTP is bound by residues Gln152, Tyr166, and Gln176.

The protein belongs to the dCTP deaminase family. In terms of assembly, homotrimer.

The catalysed reaction is dCTP + H2O + H(+) = dUTP + NH4(+). It functions in the pathway pyrimidine metabolism; dUMP biosynthesis; dUMP from dCTP (dUTP route): step 1/2. Catalyzes the deamination of dCTP to dUTP. This Sulfurovum sp. (strain NBC37-1) protein is dCTP deaminase.